The chain runs to 486 residues: Pup--protein ligase (486 aa).

Residue E33 coordinates Mg(2+). Position 76 (R76) interacts with ATP. Y78 lines the Mg(2+) pocket. The active-site Proton acceptor is the D80. E86 provides a ligand contact to Mg(2+). Residues T89 and W451 each coordinate ATP.

The protein belongs to the Pup ligase/Pup deamidase family. Pup-conjugating enzyme subfamily.

The enzyme catalyses ATP + [prokaryotic ubiquitin-like protein]-L-glutamate + [protein]-L-lysine = ADP + phosphate + N(6)-([prokaryotic ubiquitin-like protein]-gamma-L-glutamyl)-[protein]-L-lysine.. Its pathway is protein degradation; proteasomal Pup-dependent pathway. It participates in protein modification; protein pupylation. In terms of biological role, catalyzes the covalent attachment of the prokaryotic ubiquitin-like protein modifier Pup to the proteasomal substrate proteins, thereby targeting them for proteasomal degradation. This tagging system is termed pupylation. The ligation reaction involves the side-chain carboxylate of the C-terminal glutamate of Pup and the side-chain amino group of a substrate lysine. The sequence is that of Pup--protein ligase from Bifidobacterium longum (strain DJO10A).